A 437-amino-acid chain; its full sequence is Ribosomal protein uS12 methylthiotransferase RimO (437 aa).

The 111-residue stretch at 4 to 114 (PRISFVSLGC…VIEAVHTAIP (111 aa)) folds into the MTTase N-terminal domain. 6 residues coordinate [4Fe-4S] cluster: Cys-13, Cys-49, Cys-78, Cys-145, Cys-149, and Cys-152. A Radical SAM core domain is found at 131 to 369 (LTPRHYAYLK…MAKQQQISTH (239 aa)). The 66-residue stretch at 372-437 (KKKIGKRLQV…DAYDLYGIAV (66 aa)) folds into the TRAM domain.

This sequence belongs to the methylthiotransferase family. RimO subfamily. It depends on [4Fe-4S] cluster as a cofactor.

The protein localises to the cytoplasm. The enzyme catalyses L-aspartate(89)-[ribosomal protein uS12]-hydrogen + (sulfur carrier)-SH + AH2 + 2 S-adenosyl-L-methionine = 3-methylsulfanyl-L-aspartate(89)-[ribosomal protein uS12]-hydrogen + (sulfur carrier)-H + 5'-deoxyadenosine + L-methionine + A + S-adenosyl-L-homocysteine + 2 H(+). Functionally, catalyzes the methylthiolation of an aspartic acid residue of ribosomal protein uS12. This chain is Ribosomal protein uS12 methylthiotransferase RimO, found in Bartonella tribocorum (strain CIP 105476 / IBS 506).